A 92-amino-acid polypeptide reads, in one-letter code: YcgL domain-containing protein Sfri_1738 (92 aa).

In terms of domain architecture, YcgL spans Met-1–Lys-85.

The protein is YcgL domain-containing protein Sfri_1738 of Shewanella frigidimarina (strain NCIMB 400).